We begin with the raw amino-acid sequence, 77 residues long: MAVKYKIKKGDEVKVIAGDDKGKVAKVIAVLPKKGQVIVEGVKVAKKAVKPTEKNPNGGFISKEMPIDISNVAKVEG.

The protein belongs to the universal ribosomal protein uL24 family. In terms of assembly, part of the 50S ribosomal subunit.

In terms of biological role, one of two assembly initiator proteins, it binds directly to the 5'-end of the 23S rRNA, where it nucleates assembly of the 50S subunit. One of the proteins that surrounds the polypeptide exit tunnel on the outside of the subunit. In Campylobacter fetus subsp. fetus (strain 82-40), this protein is Large ribosomal subunit protein uL24.